The chain runs to 671 residues: MDFKYSRELKLESLDALNLTEGIPLRVNENIDLEFRGIERAHSDWERYVGKLNGFHGGRGPQFGFVSACIPECLPERMETVSYANEFAFLHDDMTDAASKDQVNGLNDDLLGGLDFTTEARSSASGKQQMQAKLLLEMLSIDRERTMVTIKAWADFMRGAAGRDHHRGFSSLDEYIPYRCADCGEKFWFGLVTFAMALSIPEQELELVQRLAQNAYLAAGLTNDLYSYEKEQLVAERSGTGQVFNAIAVIMQEHSVSISEAEDICRGRIREYAAKYVRDVADLRAKNELSRDSLAYLETGLYGISGSTAWNLDCPRYQVSTFVDFKTPEDETAKEEFIHVPEQKQFVGDGSIEDQTTEGNQEIVLRKLPQMSTEVIEAPYTYVKSLPSKGVRQRAMHAINTWLQVPMAKMKLIEDVVERIHNSSLMLDDIEDSSPLRREYPAAHMIFGVPQTINSANYELVLALNAAHQLGNPTCLQIFIEELQRLNVGQSYDLYWTHNMITPSMNDYLRMIDSKTGGLFSMLSRLMVACSPRTVSADFDSLSRLVGRFFQIRDDYQNLVSAEYSKQKGFCEDLDEGKYSLPLIHALETCVNSDRDMLRSLLVQRRVAGHLTFEQKKLVLQIMQRCESLEFTKSQLCVLQTRIQEEIDKLVAEFGDENFSLRLLVELLVVG.

Position 92 (Asp-92) interacts with Mg(2+). Positions Asp-92–Asp-96 match the DDXXD 1 motif. The short motif at Asn-223–Glu-231 is the NSE/DTE element. Isopentenyl diphosphate contacts are provided by Lys-389, Arg-392, and His-421. 2 residues coordinate Mg(2+): Asp-428 and Asp-432. Positions Asp-428–Asp-432 match the DDXXD 2 motif. Arg-437 contributes to the dimethylallyl diphosphate binding site. Isopentenyl diphosphate is bound at residue Arg-438. Residues Lys-515, Thr-516, Gln-551, Asn-558, Lys-568, and Lys-578 each coordinate dimethylallyl diphosphate.

The protein in the N-terminal section; belongs to the terpene synthase family. This sequence in the C-terminal section; belongs to the FPP/GGPP synthase family. Mg(2+) is required as a cofactor.

It carries out the reaction 5 isopentenyl diphosphate + dimethylallyl diphosphate = all-trans-hexaprenyl diphosphate + 5 diphosphate. The catalysed reaction is all-trans-hexaprenyl diphosphate = talaropentaene + diphosphate. Its function is as follows. Bifunctional terpene synthase that converts dimethylallyl diphosphate (DMAPP) and isopentenyl diphosphate (IPP) into talaropentaene as a single product. The C-terminal prenyltransferase (PT) domain of MpMS catalyzes formation of hexaprenyl diphosphate (HexPP), whereas the N-terminal terpene cyclase (TC) domain catalyzes the cyclization of HexPP to talaropentaene. The protein is Talaropentaene synthase of Talaromyces verruculosus (Penicillium verruculosum).